Reading from the N-terminus, the 373-residue chain is Indole glucosinolate O-methyltransferase 4 (373 aa).

5 residues coordinate S-adenosyl-L-homocysteine: Gly-217, Asp-240, Asp-260, Met-261, and Lys-274. His-278 serves as the catalytic Proton acceptor.

The protein belongs to the class I-like SAM-binding methyltransferase superfamily. Cation-independent O-methyltransferase family. In terms of assembly, interacts with B'GAMMA.

It participates in secondary metabolite biosynthesis. Functionally, involved in indole glucosinolate biosynthesis. Catalyzes methoxylation reactions of the glucosinolate indole ring. Converts the hydroxy intermediates 4-hydroxy-indol-3-yl-methylglucosinolate (4OH-I3M) and 1-hydroxy-indol-3-yl-methylglucosinolate (1OH-I3M) to 4-methoxy-indol-3-yl-methylglucosinolate (4MO-I3M) and 1-methoxy-indol-3-yl-methylglucosinolate(1MO-I3M), respectively. The chain is Indole glucosinolate O-methyltransferase 4 from Arabidopsis thaliana (Mouse-ear cress).